The chain runs to 133 residues: Profilin (133 aa).

This sequence belongs to the profilin family.

Functionally, more likely to influence phosphoinositide metabolism than actin assembly. This is Profilin from Cowpox virus (strain GRI-90 / Grishak) (CPV).